Reading from the N-terminus, the 368-residue chain is DNA replication and repair protein RecF (368 aa).

Glycine 30–threonine 37 contacts ATP.

This sequence belongs to the RecF family.

The protein localises to the cytoplasm. In terms of biological role, the RecF protein is involved in DNA metabolism; it is required for DNA replication and normal SOS inducibility. RecF binds preferentially to single-stranded, linear DNA. It also seems to bind ATP. The sequence is that of DNA replication and repair protein RecF from Marinomonas sp. (strain MWYL1).